A 99-amino-acid chain; its full sequence is Elongin-C (99 aa).

Ser2 is modified (N-acetylserine). A Phosphoserine modification is found at Ser2.

Belongs to the SKP1 family. In terms of assembly, heterodimer with ELA1. Component of a CRL3 E3 ubiquitin ligase complex consisting of the cullin CUL3, the linker protein ELC1, the substrate receptor ELA1, and the RING protein HRT1. Interacts with CIN5. Interacts with PCL6. Interacts with SNF4. Interacts with the large RNA polymerase II subunit RPO21 in a manner dependent on DEF1. Interacts with DEF1. Interacts with RAD7. Interacts with RAD16.

The protein resides in the cytoplasm. It localises to the nucleus. In terms of biological role, as part of the CRL3 E3 ubiquitin ligase complex; polyubiquitylates monoubiquitylated RNA polymerase II subunit RPO21 to trigger its proteolysis; plays a role in global genomic repair. Prevents degradation of interacting proteins like PCL6 by the proteasome. In Saccharomyces cerevisiae (strain ATCC 204508 / S288c) (Baker's yeast), this protein is Elongin-C (ELC1).